A 267-amino-acid chain; its full sequence is Distal basal body ring component protein (267 aa).

The first 29 residues, 1-29 (MKAFLFAAAATLVITALSAPAFAGTPVTL), serve as a signal peptide directing secretion.

In terms of assembly, flaD is a subunit of the flagellar transenvelope basal body.

Its subcellular location is the periplasm. It localises to the bacterial flagellum basal body. FlaD might be the structural protein of the distal basal body ring P, or it is necessary for the assembly of the P ring. The chain is Distal basal body ring component protein (flaD) from Caulobacter vibrioides (strain ATCC 19089 / CIP 103742 / CB 15) (Caulobacter crescentus).